We begin with the raw amino-acid sequence, 318 residues long: Bifunctional protein FolD 3 (318 aa).

NADP(+) is bound by residues 173 to 175 and Ile-242; that span reads GRS.

Belongs to the tetrahydrofolate dehydrogenase/cyclohydrolase family. As to quaternary structure, homodimer.

The enzyme catalyses (6R)-5,10-methylene-5,6,7,8-tetrahydrofolate + NADP(+) = (6R)-5,10-methenyltetrahydrofolate + NADPH. The catalysed reaction is (6R)-5,10-methenyltetrahydrofolate + H2O = (6R)-10-formyltetrahydrofolate + H(+). It participates in one-carbon metabolism; tetrahydrofolate interconversion. Catalyzes the oxidation of 5,10-methylenetetrahydrofolate to 5,10-methenyltetrahydrofolate and then the hydrolysis of 5,10-methenyltetrahydrofolate to 10-formyltetrahydrofolate. This chain is Bifunctional protein FolD 3, found in Rubrobacter xylanophilus (strain DSM 9941 / JCM 11954 / NBRC 16129 / PRD-1).